Reading from the N-terminus, the 490-residue chain is Phenylacetaldehyde synthase (490 aa).

Positions 92, 193, and 308 each coordinate L-phenylalanine. Lys309 is subject to N6-(pyridoxal phosphate)lysine. Phe338 is a binding site for L-phenylalanine.

It belongs to the group II decarboxylase family. Homodimer. The cofactor is pyridoxal 5'-phosphate. Expressed in roots, rosette leaves, stems, cauline leaves and flowers.

The catalysed reaction is L-phenylalanine + O2 + H2O + H(+) = 2-phenylacetaldehyde + H2O2 + NH4(+) + CO2. The enzyme catalyses L-dopa + O2 + H2O + H(+) = 3,4-dihydroxyphenylacetaldehyde + H2O2 + NH4(+) + CO2. Its function is as follows. Bifunctional enzyme that catalyzes the decarboxylation of L-phenylalanine to 2-phenylethylamine, which is then oxidized to form 2-phenylacetaldehyde, a constituent of floral scent. 2-phenylacetaldehyde is a precursor of 2-phenylethanol, another constituent of floral scent. Catalyzes both the decarboxylation and deamination of L-dopa to 3,4-dihydroxylphenylacetaldehyde (DHPAA). This chain is Phenylacetaldehyde synthase, found in Arabidopsis thaliana (Mouse-ear cress).